The following is a 504-amino-acid chain: Glucose-6-phosphate isomerase (504 aa).

Glu333 acts as the Proton donor in catalysis. Active-site residues include His364 and Lys473.

This sequence belongs to the GPI family.

The protein resides in the cytoplasm. It carries out the reaction alpha-D-glucose 6-phosphate = beta-D-fructose 6-phosphate. The protein operates within carbohydrate biosynthesis; gluconeogenesis. It participates in carbohydrate degradation; glycolysis; D-glyceraldehyde 3-phosphate and glycerone phosphate from D-glucose: step 2/4. In terms of biological role, catalyzes the reversible isomerization of glucose-6-phosphate to fructose-6-phosphate. The polypeptide is Glucose-6-phosphate isomerase (Stenotrophomonas maltophilia (strain K279a)).